A 427-amino-acid polypeptide reads, in one-letter code: Sensor histidine kinase ArsS (427 aa).

Transmembrane regions (helical) follow at residues 3–23 (FSIF…FGAF) and 131–151 (NYFL…LFVL). Residues 151-203 (LQSLLPLRELRSQVKPFAQGDKSVSCKSKQKDEIGDLANEFDNCILKINAMNE) form the HAMP domain. The Histidine kinase domain maps to 211 to 398 (SIMHELRTPI…LSYHYSNGRI (188 aa)). Residue H214 is modified to Phosphohistidine; by autocatalysis.

Autophosphorylated.

Its subcellular location is the membrane. The enzyme catalyses ATP + protein L-histidine = ADP + protein N-phospho-L-histidine.. Its function is as follows. Member of the two-component regulatory system ArsS/ArsR that regulates genes involved in biofilm formation and acid adaptation by acting on major ammonia-producing pathways. Functions as a sensor protein kinase which is autophosphorylated at a histidine residue and transfers its phosphate group to the conserved aspartic acid residue in the regulatory domain of ArsR. In turn, ArsR binds to the upstream promoter regions of target genes including ureA, amiE and amiF to positively regulate their expression in response to acidic pH. Also participates in acidic acclimatation in a phosphorylation-independent pathway by regulating acid-induced trafficking of urease and its accessory proteins to the inner membrane. The sequence is that of Sensor histidine kinase ArsS from Helicobacter pylori (strain ATCC 700392 / 26695) (Campylobacter pylori).